The following is a 201-amino-acid chain: Glutathione peroxidase 1 (201 aa).

Position 32 is a phosphoserine (S32). The active site involves U47. Position 47 (U47) is a non-standard amino acid, selenocysteine. An N6-acetyllysine; alternate mark is found at K86, K112, and K146. N6-succinyllysine; alternate is present on residues K86, K112, and K146. Phosphoserine occurs at positions 195 and 199.

It belongs to the glutathione peroxidase family. Homotetramer. Interacts with MIEN1. Post-translationally, during periods of oxidative stress, Sec-47 may react with a superoxide radical, irreversibly lose hydroselenide and be converted to dehydroalanine.

The protein localises to the cytoplasm. The protein resides in the mitochondrion. The enzyme catalyses 2 glutathione + H2O2 = glutathione disulfide + 2 H2O. It carries out the reaction a hydroperoxy polyunsaturated fatty acid + 2 glutathione = a hydroxy polyunsaturated fatty acid + glutathione disulfide + H2O. It catalyses the reaction tert-butyl hydroperoxide + 2 glutathione = tert-butanol + glutathione disulfide + H2O. The catalysed reaction is cumene hydroperoxide + 2 glutathione = 2-phenylpropan-2-ol + glutathione disulfide + H2O. The enzyme catalyses (13S)-hydroperoxy-(9Z,11E)-octadecadienoate + 2 glutathione = (13S)-hydroxy-(9Z,11E)-octadecadienoate + glutathione disulfide + H2O. It carries out the reaction (9S)-hydroperoxy-(10E,12Z)-octadecadienoate + 2 glutathione = (9S)-hydroxy-(10E,12Z)-octadecadienoate + glutathione disulfide + H2O. It catalyses the reaction (5S)-hydroperoxy-(6E,8Z,11Z,14Z)-eicosatetraenoate + 2 glutathione = (5S)-hydroxy-(6E,8Z,11Z,14Z)-eicosatetraenoate + glutathione disulfide + H2O. The catalysed reaction is (12S)-hydroperoxy-(5Z,8Z,10E,14Z)-eicosatetraenoate + 2 glutathione = (12S)-hydroxy-(5Z,8Z,10E,14Z)-eicosatetraenoate + glutathione disulfide + H2O. The enzyme catalyses (12R)-hydroperoxy-(5Z,8Z,10E,14Z)-eicosatetraenoate + 2 glutathione = (12R)-hydroxy-(5Z,8Z,10E,14Z)-eicosatetraenoate + glutathione disulfide + H2O. It carries out the reaction (15S)-hydroperoxy-(5Z,8Z,11Z,13E)-eicosatetraenoate + 2 glutathione = (15S)-hydroxy-(5Z,8Z,11Z,13E)-eicosatetraenoate + glutathione disulfide + H2O. It catalyses the reaction (5S)-hydroperoxy-(6E,8Z,11Z,14Z,17Z)-eicosapentaenoate + 2 glutathione = (5S)-hydroxy-(6E,8Z,11Z,14Z,17Z)-eicosapentaenoate + glutathione disulfide + H2O. The catalysed reaction is (12S)-hydroperoxy-(5Z,8Z,10E,14Z,17Z)-eicosapentaenoate + 2 glutathione = (12S)-hydroxy-(5Z,8Z,10E,14Z,17Z)-eicosapentaenoate + glutathione disulfide + H2O. The enzyme catalyses (15S)-hydroperoxy-(5Z,8Z,11Z,13E,17Z)-eicosapentaenoate + 2 glutathione = (15S)-hydroxy-(5Z,8Z,11Z,13E,17Z)-eicosapentaenoate + glutathione disulfide + H2O. It carries out the reaction (15S)-hydroperoxy-(11Z,13E)-eicosadienoate + 2 glutathione = (15S)-hydroxy-(11Z,13E)-eicosadienoate + glutathione disulfide + H2O. It catalyses the reaction (17S)-hydroperoxy-(4Z,7Z,10Z,13Z,15E,19Z)-docosahexaenoate + 2 glutathione = (17S)-hydroxy-(4Z,7Z,10Z,13Z,15E,19Z)-docosahexaenoate + glutathione disulfide + H2O. Functionally, catalyzes the reduction of hydroperoxides in a glutathione-dependent manner thus regulating cellular redox homeostasis. Can reduce small soluble hydroperoxides such as H2O2, cumene hydroperoxide and tert-butyl hydroperoxide, as well as several fatty acid-derived hydroperoxides. In platelets catalyzes the reduction of 12-hydroperoxyeicosatetraenoic acid, the primary product of the arachidonate 12-lipoxygenase pathway. This is Glutathione peroxidase 1 (GPX1) from Macaca fuscata fuscata (Japanese macaque).